Reading from the N-terminus, the 271-residue chain is Hydroxyethylthiazole kinase (271 aa).

A substrate-binding site is contributed by methionine 45. Arginine 121 and threonine 168 together coordinate ATP. Position 195 (glycine 195) interacts with substrate.

It belongs to the Thz kinase family. Requires Mg(2+) as cofactor.

The enzyme catalyses 5-(2-hydroxyethyl)-4-methylthiazole + ATP = 4-methyl-5-(2-phosphooxyethyl)-thiazole + ADP + H(+). The protein operates within cofactor biosynthesis; thiamine diphosphate biosynthesis; 4-methyl-5-(2-phosphoethyl)-thiazole from 5-(2-hydroxyethyl)-4-methylthiazole: step 1/1. In terms of biological role, catalyzes the phosphorylation of the hydroxyl group of 4-methyl-5-beta-hydroxyethylthiazole (THZ). This chain is Hydroxyethylthiazole kinase, found in Bacillus pumilus (strain SAFR-032).